The chain runs to 1291 residues: DNA-directed RNA polymerase subunit beta (1291 aa).

Belongs to the RNA polymerase beta chain family. The RNAP catalytic core consists of 2 alpha, 1 beta, 1 beta' and 1 omega subunit. When a sigma factor is associated with the core the holoenzyme is formed, which can initiate transcription.

The catalysed reaction is RNA(n) + a ribonucleoside 5'-triphosphate = RNA(n+1) + diphosphate. DNA-dependent RNA polymerase catalyzes the transcription of DNA into RNA using the four ribonucleoside triphosphates as substrates. This chain is DNA-directed RNA polymerase subunit beta, found in Mycoplasma mycoides subsp. mycoides SC (strain CCUG 32753 / NCTC 10114 / PG1).